The following is a 93-amino-acid chain: Alpha-defensin 15 (93 aa).

The N-terminal stretch at 1 to 19 (MKTLVLLSALVLLAFQVQA) is a signal peptide. A propeptide spanning residues 20–58 (DPIQNTDEETKTEEQPGEDDQAVSVSFGDPEGSSLQEES) is cleaved from the precursor. Residues 23–56 (QNTDEETKTEEQPGEDDQAVSVSFGDPEGSSLQE) form a disordered region. 3 disulfides stabilise this stretch: Cys64/Cys92, Cys66/Cys81, and Cys71/Cys91.

This sequence belongs to the alpha-defensin family. In terms of tissue distribution, paneth cells of the small bowel.

It localises to the secreted. In terms of biological role, probably contributes to the antimicrobial barrier function of the small bowel mucosa. The polypeptide is Alpha-defensin 15 (Defa15) (Mus musculus (Mouse)).